A 264-amino-acid chain; its full sequence is S-adenosylmethionine decarboxylase proenzyme (264 aa).

The Schiff-base intermediate with substrate; via pyruvic acid role is filled by Ser-111. Position 111 is a pyruvic acid (Ser); by autocatalysis (Ser-111). The Proton acceptor; for processing activity role is filled by His-116. Catalysis depends on Cys-139, which acts as the Proton donor; for catalytic activity.

It belongs to the prokaryotic AdoMetDC family. Type 2 subfamily. Heterooctamer of four alpha and four beta chains arranged as a tetramer of alpha/beta heterodimers. It depends on pyruvate as a cofactor. Is synthesized initially as an inactive proenzyme. Formation of the active enzyme involves a self-maturation process in which the active site pyruvoyl group is generated from an internal serine residue via an autocatalytic post-translational modification. Two non-identical subunits are generated from the proenzyme in this reaction, and the pyruvate is formed at the N-terminus of the alpha chain, which is derived from the carboxyl end of the proenzyme. The post-translation cleavage follows an unusual pathway, termed non-hydrolytic serinolysis, in which the side chain hydroxyl group of the serine supplies its oxygen atom to form the C-terminus of the beta chain, while the remainder of the serine residue undergoes an oxidative deamination to produce ammonia and the pyruvoyl group blocking the N-terminus of the alpha chain.

The catalysed reaction is S-adenosyl-L-methionine + H(+) = S-adenosyl 3-(methylsulfanyl)propylamine + CO2. It participates in amine and polyamine biosynthesis; S-adenosylmethioninamine biosynthesis; S-adenosylmethioninamine from S-adenosyl-L-methionine: step 1/1. Catalyzes the decarboxylation of S-adenosylmethionine to S-adenosylmethioninamine (dcAdoMet), the propylamine donor required for the synthesis of the polyamines spermine and spermidine from the diamine putrescine. The chain is S-adenosylmethionine decarboxylase proenzyme from Geobacillus kaustophilus (strain HTA426).